The primary structure comprises 292 residues: MEEKSEDCKVPEDLFNGLKVADPQEGESASPMVSDPKGQHCQSKLPKAAEAHPQDDHVEEECFHDCSASFEEEQPGAHVAGSKASDDSSSELDEEYLIELEKNMPEEEKQKRREESAKLKEEGNERFKRGDYMEAESSYSQALQMCPACFQKDRSVLFSNRAAARMKQDKKETAITDCSKAIQLNPTYIRAILRRAELYEKTDKLDEALEDYKSVLEKDPSVHQAREACMRLPKQIEERNERLKEEMLGKLKDLGNLVLRPFGLSTENFQIKQDSSTGSYSINFVQNPNNNR.

Basic and acidic residues-rich tracts occupy residues 1–12 and 47–64; these read MEEKSEDCKVPE and KAAE…ECFH. The tract at residues 1–125 is disordered; sequence MEEKSEDCKV…SAKLKEEGNE (125 aa). Residues 88 to 98 show a composition bias toward acidic residues; that stretch reads SSSELDEEYLI. Ser90 carries the phosphoserine modification. Positions 99–125 are enriched in basic and acidic residues; sequence ELEKNMPEEEKQKRREESAKLKEEGNE. 3 TPR repeats span residues 116–149, 155–188, and 189–222; these read SAKL…CPAC, SVLF…NPTY, and IRAI…DPSV.

In terms of assembly, interacts with the GAP domain of NF1. Interacts (via TPR repeats) with HSP90AA1 and HSPA8.

This chain is Tetratricopeptide repeat protein 1 (Ttc1), found in Mus musculus (Mouse).